Consider the following 393-residue polypeptide: Formate-dependent phosphoribosylglycinamide formyltransferase (393 aa).

Residues 22–23 (EL) and glutamate 82 each bind N(1)-(5-phospho-beta-D-ribosyl)glycinamide. Residues arginine 114, lysine 155, 160 to 165 (SSGHGQ), 195 to 198 (EGFV), and glutamate 203 contribute to the ATP site. Residues 119 to 308 (RLAAEKLKLP…EFALHARAIL (190 aa)) form the ATP-grasp domain. Residues glutamate 267 and glutamate 279 each contribute to the Mg(2+) site. Residues aspartate 286, lysine 356, and 363 to 364 (RR) each bind N(1)-(5-phospho-beta-D-ribosyl)glycinamide.

It belongs to the PurK/PurT family. As to quaternary structure, homodimer.

It carries out the reaction N(1)-(5-phospho-beta-D-ribosyl)glycinamide + formate + ATP = N(2)-formyl-N(1)-(5-phospho-beta-D-ribosyl)glycinamide + ADP + phosphate + H(+). It functions in the pathway purine metabolism; IMP biosynthesis via de novo pathway; N(2)-formyl-N(1)-(5-phospho-D-ribosyl)glycinamide from N(1)-(5-phospho-D-ribosyl)glycinamide (formate route): step 1/1. Functionally, involved in the de novo purine biosynthesis. Catalyzes the transfer of formate to 5-phospho-ribosyl-glycinamide (GAR), producing 5-phospho-ribosyl-N-formylglycinamide (FGAR). Formate is provided by PurU via hydrolysis of 10-formyl-tetrahydrofolate. The chain is Formate-dependent phosphoribosylglycinamide formyltransferase from Histophilus somni (strain 129Pt) (Haemophilus somnus).